The following is a 51-amino-acid chain: uncharacterized protein (51 aa).

Positions 1–28 are disordered; it reads MQQPQNITTSSISNNNNNNTSLTLQQQQ. Residues 13–47 adopt a coiled-coil conformation; the sequence is SNNNNNNTSLTLQQQQEQLQQLQIKRKRNLMKQLQ.

This is an uncharacterized protein from Dictyostelium discoideum (Social amoeba).